We begin with the raw amino-acid sequence, 408 residues long: Arginine biosynthesis bifunctional protein ArgJ (408 aa).

Substrate-binding residues include threonine 158, lysine 184, threonine 195, glutamate 281, asparagine 403, and threonine 408. The active-site Nucleophile is the threonine 195.

It belongs to the ArgJ family. As to quaternary structure, heterotetramer of two alpha and two beta chains.

It localises to the cytoplasm. The catalysed reaction is N(2)-acetyl-L-ornithine + L-glutamate = N-acetyl-L-glutamate + L-ornithine. It carries out the reaction L-glutamate + acetyl-CoA = N-acetyl-L-glutamate + CoA + H(+). Its pathway is amino-acid biosynthesis; L-arginine biosynthesis; L-ornithine and N-acetyl-L-glutamate from L-glutamate and N(2)-acetyl-L-ornithine (cyclic): step 1/1. It participates in amino-acid biosynthesis; L-arginine biosynthesis; N(2)-acetyl-L-ornithine from L-glutamate: step 1/4. Catalyzes two activities which are involved in the cyclic version of arginine biosynthesis: the synthesis of N-acetylglutamate from glutamate and acetyl-CoA as the acetyl donor, and of ornithine by transacetylation between N(2)-acetylornithine and glutamate. The chain is Arginine biosynthesis bifunctional protein ArgJ from Shouchella clausii (strain KSM-K16) (Alkalihalobacillus clausii).